The following is a 249-amino-acid chain: tRNA pseudouridine synthase A (249 aa).

The active-site Nucleophile is the Asp52. Tyr110 serves as a coordination point for substrate.

The protein belongs to the tRNA pseudouridine synthase TruA family. Homodimer.

The catalysed reaction is uridine(38/39/40) in tRNA = pseudouridine(38/39/40) in tRNA. Formation of pseudouridine at positions 38, 39 and 40 in the anticodon stem and loop of transfer RNAs. The sequence is that of tRNA pseudouridine synthase A from Syntrophomonas wolfei subsp. wolfei (strain DSM 2245B / Goettingen).